Here is a 348-residue protein sequence, read N- to C-terminus: tRNA pseudouridine synthase D (348 aa).

The active-site Nucleophile is D78. The 155-residue stretch at 150–304 folds into the TRUD domain; that stretch reads GLPNFFGPQR…AEGTRRAARL (155 aa).

The protein belongs to the pseudouridine synthase TruD family.

It catalyses the reaction uridine(13) in tRNA = pseudouridine(13) in tRNA. Responsible for synthesis of pseudouridine from uracil-13 in transfer RNAs. The chain is tRNA pseudouridine synthase D from Anaeromyxobacter dehalogenans (strain 2CP-1 / ATCC BAA-258).